Reading from the N-terminus, the 99-residue chain is Putative UPF0320 protein YDR543C (99 aa).

Residues 80 to 99 form a disordered region; sequence EKSPPKSPKHKNILSFNNNT.

This sequence belongs to the UPF0320 family.

The sequence is that of Putative UPF0320 protein YDR543C from Saccharomyces cerevisiae (strain ATCC 204508 / S288c) (Baker's yeast).